Consider the following 299-residue polypeptide: Cancer/testis antigen family 47 member B1 (299 aa).

Residues 1–10 (MSATGDRHPT) show a composition bias toward basic and acidic residues. 2 disordered regions span residues 1–102 (MSAT…EGNE) and 215–299 (AREP…SKGT). Low complexity-rich tracts occupy residues 20 to 31 (QEGAQAEAAGAG) and 46 to 60 (VPAA…PVEG). The segment covering 81 to 101 (AEEDSDIGPATEEEEEEEEGN) has biased composition (acidic residues). Residues 215–238 (AREPAEEAADEKPPEEAAEEKLTE) are compositionally biased toward basic and acidic residues. Acidic residues-rich tracts occupy residues 239–251 (EATE…EPTS) and 268–281 (WDEE…EEEK). Positions 270–298 (EEAQDAAGEEEKEQEKEKDVENKVKNSKG) form a coiled coil. A compositionally biased stretch (basic and acidic residues) spans 282–293 (EQEKEKDVENKV).

The protein belongs to the CT47 family.

The protein is Cancer/testis antigen family 47 member B1 of Homo sapiens (Human).